The sequence spans 348 residues: Phosphate acyltransferase (348 aa).

It belongs to the PlsX family. Homodimer. Probably interacts with PlsY.

It localises to the cytoplasm. The catalysed reaction is a fatty acyl-[ACP] + phosphate = an acyl phosphate + holo-[ACP]. It participates in lipid metabolism; phospholipid metabolism. Functionally, catalyzes the reversible formation of acyl-phosphate (acyl-PO(4)) from acyl-[acyl-carrier-protein] (acyl-ACP). This enzyme utilizes acyl-ACP as fatty acyl donor, but not acyl-CoA. The protein is Phosphate acyltransferase of Nitrosomonas europaea (strain ATCC 19718 / CIP 103999 / KCTC 2705 / NBRC 14298).